An 855-amino-acid chain; its full sequence is Discoidin domain-containing receptor 2 (855 aa).

A signal peptide spans 1–21 (MILIPRMLLVLFLLLPILSSA). Residues 22–399 (KAQVNPAICR…MLKVDDSNTR (378 aa)) are Extracellular-facing. The region spanning 30–185 (CRYPLGMSGG…VCMRVELYGC (156 aa)) is the F5/8 type C domain. 2 disulfides stabilise this stretch: cysteine 30/cysteine 185 and cysteine 73/cysteine 177. Residues asparagine 121, asparagine 213, asparagine 261, asparagine 280, and asparagine 372 are each glycosylated (N-linked (GlcNAc...) asparagine). A helical transmembrane segment spans residues 400–421 (ILIGCLVAIIFILLAIIVIILW). Residues 422 to 855 (RQFWQKMLEK…HLLLLQQGDE (434 aa)) are Cytoplasmic-facing. The interval 452 to 471 (SMFNNNRSSSPSEQGSNSTY) is disordered. Tyrosine 471 is subject to Phosphotyrosine; by SRC and autocatalysis. One can recognise a Protein kinase domain in the interval 563-849 (LTFKEKLGEG…PSFQEIHLLL (287 aa)). ATP is bound by residues 569–577 (LGEGQFGEV) and lysine 608. The Proton acceptor role is filled by aspartate 710. A phosphotyrosine; by SRC and autocatalysis mark is found at tyrosine 736, tyrosine 740, and tyrosine 741.

This sequence belongs to the protein kinase superfamily. Tyr protein kinase family. Insulin receptor subfamily. As to quaternary structure, binds hydroxyproline-rich sequence motifs in fibrillar, glycosylated collagen, such as the GQOGVMGFO motif, where O stands for hydroxyproline. Interacts with SRC. Interacts (tyrosine phosphorylated) with SHC1. N-glycosylated. In terms of processing, tyrosine phosphorylated in response to collagen binding. Phosphorylated by SRC; this is required for activation and subsequent autophosphorylation on additional tyrosine residues. As to expression, detected in osteocytes, osteoblastic cells in subchondral bone, bone lining cells, tibia and cartilage (at protein level). Detected at high levels in heart and lung, and at low levels in brain, placenta, liver, skeletal muscle, pancreas, and kidney.

Its subcellular location is the cell membrane. The catalysed reaction is L-tyrosyl-[protein] + ATP = O-phospho-L-tyrosyl-[protein] + ADP + H(+). With respect to regulation, present in an inactive state in the absence of collagen binding and phosphorylation by SRC. Tyrosine phosphorylation enhances the affinity for ATP and the catalytic activity. In terms of biological role, tyrosine kinase involved in the regulation of tissues remodeling. It functions as a cell surface receptor for fibrillar collagen and regulates cell differentiation, remodeling of the extracellular matrix, cell migration and cell proliferation. Required for normal bone development. Regulates osteoblast differentiation and chondrocyte maturation via a signaling pathway that involves MAP kinases and leads to the activation of the transcription factor RUNX2. Regulates remodeling of the extracellular matrix by up-regulation of the collagenases MMP1, MMP2 and MMP13, and thereby facilitates cell migration and tumor cell invasion. Promotes fibroblast migration and proliferation, and thereby contributes to cutaneous wound healing. The protein is Discoidin domain-containing receptor 2 (DDR2) of Homo sapiens (Human).